The sequence spans 76 residues: Serine proteinase inhibitor IA-2 (76 aa).

An N-acetylserine modification is found at Ser-1.

The protein belongs to the protease inhibitor I9 family.

Specifically inhibits an intracellular serine proteinase (proteinase A). In Pleurotus ostreatus (Oyster mushroom), this protein is Serine proteinase inhibitor IA-2.